The chain runs to 614 residues: MDREIRILHTADTHLGYRQYHSEVRRQDFFKAFETVIQDAVDMQVDAVVHAGDLFDSRNPTLEDLLETMNILSRLKAVDIPFFGIVGNHESKQNTQWLDLFEEMGLAERLGKTPKLVGNTTIYGIDSVPKSKIPLYDYSGFELPDSLPENCKKLLVMHQIVQPFPYADWDCAEVLENLPFKVDAILLGDYHKYEKIKVGEEETWATYSGSTERNSASENEPRSYNIITLSGEGLEISRRTIPTRNFLFITAKIDGEEKPYEQIFSAINEHLEEIPESVVFLDISGNSDSVLSFSEIEEYLLSKGALVSKVKDARIKETLPEEVAKVAFSDPDHAVAEEIRRMSLNDGGLIVDEIIRSPDVVRSRVDEETENRLLRLIETIDFEDPDFRIEIPASPISSTDSIDPVSPINHPVSSADSVSAVSPESSADHVSPDIIENNEKPIPAVEAEKIETLDPAGETEFVAGIAGKTETFRAPVRIKNSESLNEALKKSYEAPDKVREAPDVNPEPPEPLPAFKNIGSPETFGSCETTVSSEVPEKGGERTELEDDAVNKTEKETGKLSGFGVEAGSEKEDADRIEKPAHVPDKAEKPVKQSQRKGKGKSAVPRQYNLGDYL.

Aspartate 12, histidine 14, aspartate 53, and asparagine 88 together coordinate Mn(2+). Histidine 89 functions as the Proton donor in the catalytic mechanism. 3 residues coordinate Mn(2+): histidine 158, aspartate 189, and histidine 191. Disordered stretches follow at residues 393–434 and 487–614; these read ASPI…SPDI and ALKK…GDYL. A compositionally biased stretch (low complexity) spans 411–425; that stretch reads PVSSADSVSAVSPES. Composition is skewed to basic and acidic residues over residues 487–502, 535–558, and 568–591; these read ALKKSYEAPDKVREAP, VPEKGGERTELEDDAVNKTEKETG, and GSEKEDADRIEKPAHVPDKAEKPV.

This sequence belongs to the MRE11/RAD32 family. As to quaternary structure, homodimer. Forms a heterotetramer composed of two Mre11 subunits and two Rad50 subunits. The cofactor is Mn(2+).

With respect to regulation, nuclease activity is regulated by Rad50. Part of the Rad50/Mre11 complex, which is involved in the early steps of DNA double-strand break (DSB) repair. The complex may facilitate opening of the processed DNA ends to aid in the recruitment of HerA and NurA. Mre11 binds to DSB ends and has both double-stranded 3'-5' exonuclease activity and single-stranded endonuclease activity. The polypeptide is DNA double-strand break repair protein Mre11 (Methanosarcina acetivorans (strain ATCC 35395 / DSM 2834 / JCM 12185 / C2A)).